Reading from the N-terminus, the 531-residue chain is Light-independent protochlorophyllide reductase subunit B (531 aa).

Aspartate 36 is a [4Fe-4S] cluster binding site. The active-site Proton donor is aspartate 296. Substrate is bound at residue 431-432; the sequence is GM.

Belongs to the ChlB/BchB/BchZ family. Protochlorophyllide reductase is composed of three subunits; ChlL, ChlN and ChlB. Forms a heterotetramer of two ChlB and two ChlN subunits. The cofactor is [4Fe-4S] cluster.

The protein localises to the plastid. Its subcellular location is the chloroplast. The enzyme catalyses chlorophyllide a + oxidized 2[4Fe-4S]-[ferredoxin] + 2 ADP + 2 phosphate = protochlorophyllide a + reduced 2[4Fe-4S]-[ferredoxin] + 2 ATP + 2 H2O. Its pathway is porphyrin-containing compound metabolism; chlorophyll biosynthesis (light-independent). Its function is as follows. Component of the dark-operative protochlorophyllide reductase (DPOR) that uses Mg-ATP and reduced ferredoxin to reduce ring D of protochlorophyllide (Pchlide) to form chlorophyllide a (Chlide). This reaction is light-independent. The NB-protein (ChlN-ChlB) is the catalytic component of the complex. The protein is Light-independent protochlorophyllide reductase subunit B of Nephroselmis olivacea (Green alga).